A 643-amino-acid chain; its full sequence is Pesticidal crystal protein Cry11Aa (643 aa).

The protein belongs to the delta endotoxin family.

In terms of biological role, promotes colloidosmotic lysis by binding to the midgut epithelial cells of mosquitos. In Bacillus thuringiensis subsp. israelensis, this protein is Pesticidal crystal protein Cry11Aa (cry11Aa).